The following is a 177-amino-acid chain: Large ribosomal subunit protein uL30 (177 aa).

This sequence belongs to the universal ribosomal protein uL30 family. In terms of assembly, part of the 50S ribosomal subunit.

The protein is Large ribosomal subunit protein uL30 of Pyrobaculum islandicum (strain DSM 4184 / JCM 9189 / GEO3).